The chain runs to 238 residues: Probable septum site-determining protein MinC (238 aa).

It belongs to the MinC family. As to quaternary structure, interacts with MinD and FtsZ.

Functionally, cell division inhibitor that blocks the formation of polar Z ring septums. Rapidly oscillates between the poles of the cell to destabilize FtsZ filaments that have formed before they mature into polar Z rings. Prevents FtsZ polymerization. This is Probable septum site-determining protein MinC from Blochmanniella floridana.